The following is a 504-amino-acid chain: D-alanine--D-alanyl carrier protein ligase (504 aa).

152 to 153 (TS) contributes to the ATP binding site. Aspartate 197 lines the D-alanine pocket. Residue 292–297 (NTYGPT) participates in ATP binding. Valine 301 lines the D-alanine pocket. ATP is bound by residues aspartate 383, 394–397 (YNGR), and lysine 492. Lysine 492 contacts D-alanine.

Belongs to the ATP-dependent AMP-binding enzyme family. DltA subfamily.

The protein localises to the cytoplasm. It catalyses the reaction holo-[D-alanyl-carrier protein] + D-alanine + ATP = D-alanyl-[D-alanyl-carrier protein] + AMP + diphosphate. It participates in cell wall biogenesis; lipoteichoic acid biosynthesis. Catalyzes the first step in the D-alanylation of lipoteichoic acid (LTA), the activation of D-alanine and its transfer onto the D-alanyl carrier protein (Dcp) DltC. In an ATP-dependent two-step reaction, forms a high energy D-alanyl-AMP intermediate, followed by transfer of the D-alanyl residue as a thiol ester to the phosphopantheinyl prosthetic group of the Dcp. D-alanylation of LTA plays an important role in modulating the properties of the cell wall in Gram-positive bacteria, influencing the net charge of the cell wall. The protein is D-alanine--D-alanyl carrier protein ligase of Bacillus cereus (strain Q1).